Consider the following 170-residue polypeptide: Acireductone dioxygenase (170 aa).

Fe(2+) contacts are provided by His99, His101, Glu105, and His144. Residues His99, His101, Glu105, and His144 each contribute to the Ni(2+) site.

It belongs to the acireductone dioxygenase (ARD) family. In terms of assembly, monomer. It depends on Fe(2+) as a cofactor. The cofactor is Ni(2+).

It carries out the reaction 1,2-dihydroxy-5-(methylsulfanyl)pent-1-en-3-one + O2 = 3-(methylsulfanyl)propanoate + CO + formate + 2 H(+). The enzyme catalyses 1,2-dihydroxy-5-(methylsulfanyl)pent-1-en-3-one + O2 = 4-methylsulfanyl-2-oxobutanoate + formate + 2 H(+). It participates in amino-acid biosynthesis; L-methionine biosynthesis via salvage pathway; L-methionine from S-methyl-5-thio-alpha-D-ribose 1-phosphate: step 5/6. In terms of biological role, catalyzes 2 different reactions between oxygen and the acireductone 1,2-dihydroxy-3-keto-5-methylthiopentene (DHK-MTPene) depending upon the metal bound in the active site. Fe-containing acireductone dioxygenase (Fe-ARD) produces formate and 2-keto-4-methylthiobutyrate (KMTB), the alpha-ketoacid precursor of methionine in the methionine recycle pathway. Ni-containing acireductone dioxygenase (Ni-ARD) produces methylthiopropionate, carbon monoxide and formate, and does not lie on the methionine recycle pathway. This Bacillus thuringiensis (strain Al Hakam) protein is Acireductone dioxygenase.